A 224-amino-acid chain; its full sequence is tRNA (guanine-N(7)-)-methyltransferase (224 aa).

Residues glutamate 56, glutamate 81, aspartate 108, and aspartate 131 each contribute to the S-adenosyl-L-methionine site. Residue aspartate 131 is part of the active site. Residues lysine 135, aspartate 167, and 202 to 205 (TKFE) contribute to the substrate site.

It belongs to the class I-like SAM-binding methyltransferase superfamily. TrmB family.

It catalyses the reaction guanosine(46) in tRNA + S-adenosyl-L-methionine = N(7)-methylguanosine(46) in tRNA + S-adenosyl-L-homocysteine. Its pathway is tRNA modification; N(7)-methylguanine-tRNA biosynthesis. Functionally, catalyzes the formation of N(7)-methylguanine at position 46 (m7G46) in tRNA. The protein is tRNA (guanine-N(7)-)-methyltransferase of Nitrosomonas europaea (strain ATCC 19718 / CIP 103999 / KCTC 2705 / NBRC 14298).